Here is a 912-residue protein sequence, read N- to C-terminus: Alpha-actinin-4 (912 aa).

The segment at 1-267 (MVDYHAANQA…IMTYVSSFYH (267 aa)) is actin-binding. Residues 12–27 (QYGPNSGGGNGAGGGG) are interaction with VCL. Residues 12–31 (QYGPNSGGGNGAGGGGSMGD) are disordered. Residues 16–29 (NSGGGNGAGGGGSM) show a composition bias toward gly residues. Tyr-32 bears the Phosphotyrosine mark. The tract at residues 41–62 (RDLLLDPAWEKQQRKTFTAWCN) is interaction with VCL. 2 Calponin-homology (CH) domains span residues 51–155 (KQQR…LRFA) and 164–270 (TSAK…HAFS). The LXXLL motif motif lies at 85-89 (LMLLL). Positions 109–127 (KINNVNKALDFIASKGVKL) are interaction with VCL. Residue Lys-115 is modified to N6-acetyllysine. Residues 178-193 (TAPYKNVNVQNFHISW) form a polyphosphoinositide (PIP2)-binding region. At Lys-215 the chain carries N6-acetyllysine. Residue Thr-250 is modified to Phosphothreonine. Spectrin repeat units lie at residues 294–404 (HLME…WLLN), 414–519 (HLAE…ALEK), 529–640 (QLHL…ALLE), and 650–753 (HLRR…EVEN). Residues Lys-593 and Lys-626 each carry the N6-acetyllysine modification. Ser-697 carries the post-translational modification Phosphoserine. A mediates interaction with MICALL2 region spans residues 737-912 (WEQLLTTIAR…STALYGESDL (176 aa)). 2 EF-hand domains span residues 766–801 (EQMQEFRASFNHFDKDHGGALGPEEFKACLISLGYD) and 807–842 (QGDAEFNRIMSVVDPNHSGLVTFQAFIDFMSRETTD). Asp-779 lines the Ca(2+) pocket. An N6-acetyllysine modification is found at Lys-780. Residues Asp-781 and Glu-790 each coordinate Ca(2+). Position 860 is an N6-acetyllysine (Lys-860). Residue Ser-910 is modified to Phosphoserine.

Belongs to the alpha-actinin family. Homodimer; antiparallel. Interacts with MAGI1. Interacts with PDLIM2. Identified in a complex with CASK, IQGAP1, MAGI2, NPHS1, SPTAN1 and SPTBN1. Identified in a IGF2BP1-dependent mRNP granule complex containing untranslated mRNAs. Component of the CART complex, at least composed of ACTN4, HGS/HRS, MYO5B and TRIM3. Binds TRIM3 at the N-terminus. Interacts with MICALL2 (preferentially in opened conformation); stimulated by RAB13 activation. Interacts with PPARG and RARA. Binds to VCL; this interaction triggers VCL conformational changes. Interacts with SEPTIN14. Interacts with IGSF8.

It localises to the nucleus. Its subcellular location is the cytoplasm. It is found in the cell junction. The protein resides in the cytoskeleton. The protein localises to the stress fiber. It localises to the perinuclear region. Its function is as follows. F-actin cross-linking protein which is thought to anchor actin to a variety of intracellular structures. This is a bundling protein. Probably involved in vesicular trafficking via its association with the CART complex. The CART complex is necessary for efficient transferrin receptor recycling but not for EGFR degradation. Involved in tight junction assembly in epithelial cells probably through interaction with MICALL2. Links MICALL2 to the actin cytoskeleton and recruits it to the tight junctions. May also function as a transcriptional coactivator, stimulating transcription mediated by the nuclear hormone receptors PPARG and RARA. Association with IGSF8 regulates the immune synapse formation and is required for efficient T-cell activation. This chain is Alpha-actinin-4, found in Mus musculus (Mouse).